The sequence spans 260 residues: Hydroxyethylthiazole kinase 1 (260 aa).

Met39 is a substrate binding site. Arg115 and Thr160 together coordinate ATP. Position 187 (Gly187) interacts with substrate.

Belongs to the Thz kinase family. Mg(2+) serves as cofactor.

It catalyses the reaction 5-(2-hydroxyethyl)-4-methylthiazole + ATP = 4-methyl-5-(2-phosphooxyethyl)-thiazole + ADP + H(+). The protein operates within cofactor biosynthesis; thiamine diphosphate biosynthesis; 4-methyl-5-(2-phosphoethyl)-thiazole from 5-(2-hydroxyethyl)-4-methylthiazole: step 1/1. Catalyzes the phosphorylation of the hydroxyl group of 4-methyl-5-beta-hydroxyethylthiazole (THZ). This Streptococcus pneumoniae serotype 4 (strain ATCC BAA-334 / TIGR4) protein is Hydroxyethylthiazole kinase 1.